The primary structure comprises 288 residues: Syntaxin-1B (288 aa).

Residues 1-13 are compositionally biased toward basic and acidic residues; it reads MKDRTQELRSAKD. Residues 1–20 form a disordered region; sequence MKDRTQELRSAKDSDDEEEV. The Cytoplasmic portion of the chain corresponds to 1-264; the sequence is MKDRTQELRS…KYQSKARRKK (264 aa). 2 positions are modified to phosphoserine: serine 10 and serine 14. The stretch at 29–104 forms a coiled coil; that stretch reads MDEFFEQVEE…IEQSIEQEEG (76 aa). The t-SNARE coiled-coil homology domain maps to 191–253; it reads LNEIETRHNE…ERAVSDTKKA (63 aa). The chain crosses the membrane as a helical; Anchor for type IV membrane protein span at residues 265–288; sequence IMIIICCVVLGVVLASSIGGTLGL.

The protein belongs to the syntaxin family. Interacts with OTOF. Interacts with SYT6 and SYT8; the interaction is Ca(2+)-dependent. Phosphorylated by CK2.

Its subcellular location is the membrane. It is found in the nucleus. The protein resides in the cytoplasm. The protein localises to the cytoskeleton. It localises to the microtubule organizing center. Its subcellular location is the centrosome. It is found in the spindle. Its function is as follows. Potentially involved in docking of synaptic vesicles at presynaptic active zones. May mediate Ca(2+)-regulation of exocytosis acrosomal reaction in sperm. The chain is Syntaxin-1B (STX1B) from Homo sapiens (Human).